The primary structure comprises 274 residues: Kit ligand (274 aa).

Positions 1–25 (MKKTQTWIVTCIYLQLLLFNPLVKT) are cleaved as a signal peptide. Topologically, residues 26-215 (KGLCRNRVTD…TNPIEDSSIQ (190 aa)) are extracellular. 2 disulfide bridges follow: C29–C114 and C68–C164. N90, N97, N145, and N196 each carry an N-linked (GlcNAc...) asparagine glycan. Residues 216–238 (WAVMALPACFSLVIGFAFGAFYW) traverse the membrane as a helical segment. Residues 239–274 (KKKQPNLTRTVENIQINEEDNEISMLQEKEREFQEV) lie on the Cytoplasmic side of the membrane.

This sequence belongs to the SCF family. As to quaternary structure, homodimer, non-covalently linked. Post-translationally, a soluble form is produced by proteolytic processing of isoform 1 in the extracellular domain.

The protein resides in the cell membrane. The protein localises to the secreted. It localises to the cytoplasm. Its subcellular location is the cytoskeleton. It is found in the cell projection. The protein resides in the lamellipodium. The protein localises to the filopodium. Functionally, stimulates the proliferation of mast cells. Able to augment the proliferation of both myeloid and lymphoid hematopoietic progenitors in bone marrow culture. Also mediates cell-cell adhesion. Acts synergistically with other cytokines, probably interleukins. The chain is Kit ligand (KITLG) from Felis catus (Cat).